Here is a 178-residue protein sequence, read N- to C-terminus: Cell wall-binding protein YwsB (178 aa).

The N-terminal stretch at 1 to 30 is a signal peptide; that stretch reads MNKPTKLFSTLALAAGMTAAAAGGAGTIHA. SH3b domains follow at residues 47–111 and 116–178; these read IDSY…VKAA and TKTK…HMTK.

It localises to the secreted. Its subcellular location is the cell wall. Increases in stationary phase in a strain lacking the WprA protease. The chain is Cell wall-binding protein YwsB (ywsB) from Bacillus subtilis (strain 168).